We begin with the raw amino-acid sequence, 373 residues long: tRNA-specific 2-thiouridylase MnmA (373 aa).

ATP contacts are provided by residues 12-19 (GMSGGVDS) and M38. An interaction with target base in tRNA region spans residues 98–100 (NPD). Catalysis depends on C103, which acts as the Nucleophile. C103 and C200 are joined by a disulfide. G127 lines the ATP pocket. The interaction with tRNA stretch occupies residues 150 to 152 (KDQ). Residue C200 is the Cysteine persulfide intermediate of the active site. The segment at 312 to 313 (RY) is interaction with tRNA.

It belongs to the MnmA/TRMU family.

It is found in the cytoplasm. The enzyme catalyses S-sulfanyl-L-cysteinyl-[protein] + uridine(34) in tRNA + AH2 + ATP = 2-thiouridine(34) in tRNA + L-cysteinyl-[protein] + A + AMP + diphosphate + H(+). Functionally, catalyzes the 2-thiolation of uridine at the wobble position (U34) of tRNA, leading to the formation of s(2)U34. The sequence is that of tRNA-specific 2-thiouridylase MnmA from Streptococcus thermophilus (strain CNRZ 1066).